Consider the following 325-residue polypeptide: Tagatose 1,6-diphosphate aldolase 1 (325 aa).

This sequence belongs to the aldolase LacD family.

The enzyme catalyses D-tagatofuranose 1,6-bisphosphate = D-glyceraldehyde 3-phosphate + dihydroxyacetone phosphate. It functions in the pathway carbohydrate metabolism; D-tagatose 6-phosphate degradation; D-glyceraldehyde 3-phosphate and glycerone phosphate from D-tagatose 6-phosphate: step 2/2. The chain is Tagatose 1,6-diphosphate aldolase 1 (lacD1) from Streptococcus pyogenes serotype M3 (strain SSI-1).